A 170-amino-acid polypeptide reads, in one-letter code: Adenine phosphoribosyltransferase (170 aa).

This sequence belongs to the purine/pyrimidine phosphoribosyltransferase family. Homodimer.

The protein resides in the cytoplasm. It carries out the reaction AMP + diphosphate = 5-phospho-alpha-D-ribose 1-diphosphate + adenine. The protein operates within purine metabolism; AMP biosynthesis via salvage pathway; AMP from adenine: step 1/1. In terms of biological role, catalyzes a salvage reaction resulting in the formation of AMP, that is energically less costly than de novo synthesis. The chain is Adenine phosphoribosyltransferase from Alkaliphilus metalliredigens (strain QYMF).